Reading from the N-terminus, the 350-residue chain is UDP-glucose 4-epimerase (350 aa).

Residues 13–15 (GYI), 34–38 (DNLCN), 67–68 (DI), phenylalanine 89, and lysine 93 each bind NAD(+). 133–135 (SAT) serves as a coordination point for substrate. Tyrosine 158 functions as the Proton acceptor in the catalytic mechanism. NAD(+) contacts are provided by lysine 162 and tyrosine 186. Substrate is bound by residues 186–188 (YFN), 207–209 (NNL), 225–227 (SVY), arginine 240, and 303–306 (RSGD).

This sequence belongs to the NAD(P)-dependent epimerase/dehydratase family. Homodimer. NAD(+) serves as cofactor.

The enzyme catalyses UDP-alpha-D-glucose = UDP-alpha-D-galactose. It carries out the reaction UDP-N-acetyl-alpha-D-glucosamine = UDP-N-acetyl-alpha-D-galactosamine. It participates in carbohydrate metabolism; galactose metabolism. In terms of biological role, catalyzes two distinct but analogous reactions: the reversible epimerization of UDP-glucose to UDP-galactose and the reversible epimerization of UDP-N-acetylglucosamine to UDP-N-acetylgalactosamine. The reaction with UDP-Gal plays a critical role in the Leloir pathway of galactose catabolism in which galactose is converted to the glycolytic intermediate glucose 6-phosphate. It contributes to the catabolism of dietary galactose and enables the endogenous biosynthesis of both UDP-Gal and UDP-GalNAc when exogenous sources are limited. Both UDP-sugar interconversions are important in the synthesis of glycoproteins and glycolipids. This is UDP-glucose 4-epimerase (Gale) from Drosophila melanogaster (Fruit fly).